We begin with the raw amino-acid sequence, 146 residues long: Ribonuclease H (146 aa).

The RNase H type-1 domain maps to 1-143; that stretch reads MEKTITIYTD…CDELARLAIK (143 aa). Positions 10, 48, 70, and 135 each coordinate Mg(2+).

The protein belongs to the RNase H family. Monomer. Mg(2+) serves as cofactor.

It localises to the cytoplasm. It carries out the reaction Endonucleolytic cleavage to 5'-phosphomonoester.. In terms of biological role, endonuclease that specifically degrades the RNA of RNA-DNA hybrids. This Chlorobaculum parvum (strain DSM 263 / NCIMB 8327) (Chlorobium vibrioforme subsp. thiosulfatophilum) protein is Ribonuclease H.